The primary structure comprises 297 residues: Ribosome production factor 2 homolog (297 aa).

The region spanning 28-232 (KKALFCRGAK…VMRKKLADDA (205 aa)) is the Brix domain.

Belongs to the RPF2 family.

The protein resides in the nucleus. The protein localises to the nucleolus. This Caenorhabditis elegans protein is Ribosome production factor 2 homolog.